The primary structure comprises 273 residues: Protein BRANCHLESS TRICHOME (273 aa).

Residues 1–12 are compositionally biased toward polar residues; the sequence is MKDMKMQSSPET. The interval 1–30 is disordered; sequence MKDMKMQSSPETMMTRIPTPDPHSTGVRED. Residues 69 to 199 are a coiled coil; sequence IKVFMESELG…GERERNRMMK (131 aa).

In terms of assembly, interacts with STI.

In terms of biological role, acts as a key regulator of trichome branching. Could participate with STI in the same pathway. Also plays a role in integrating endoreplication levels with cell shape. This chain is Protein BRANCHLESS TRICHOME (BLT), found in Arabidopsis thaliana (Mouse-ear cress).